Consider the following 344-residue polypeptide: Golgi-associated RAB2 interactor protein 1B (344 aa).

Belongs to the GARIN family.

It is found in the golgi apparatus. RAB2B effector protein required for accurate acrosome formation and normal male fertility. In complex with RAB2A/RAB2B, seems to suppress excessive vesicle trafficking during acrosome formation. The sequence is that of Golgi-associated RAB2 interactor protein 1B (Garin1b) from Rattus norvegicus (Rat).